Consider the following 74-residue polypeptide: Exodeoxyribonuclease 7 small subunit (74 aa).

Belongs to the XseB family. As to quaternary structure, heterooligomer composed of large and small subunits.

The protein resides in the cytoplasm. It catalyses the reaction Exonucleolytic cleavage in either 5'- to 3'- or 3'- to 5'-direction to yield nucleoside 5'-phosphates.. Functionally, bidirectionally degrades single-stranded DNA into large acid-insoluble oligonucleotides, which are then degraded further into small acid-soluble oligonucleotides. The protein is Exodeoxyribonuclease 7 small subunit of Symbiobacterium thermophilum (strain DSM 24528 / JCM 14929 / IAM 14863 / T).